A 620-amino-acid chain; its full sequence is Toxin coregulated pilus biosynthesis protein I (620 aa).

The Methyl-accepting transducer domain occupies 344-580 (TMNDLSIKQT…DVAKQMEDIR (237 aa)).

The protein belongs to the methyl-accepting chemotaxis (MCP) protein family.

The protein resides in the cell inner membrane. May function as an environmental regulator of TCP biogenesis. Negatively regulates the synthesis of the major pilin subunit of TCP (TcpA). The protein is Toxin coregulated pilus biosynthesis protein I (tcpI) of Vibrio cholerae serotype O1 (strain ATCC 39315 / El Tor Inaba N16961).